The sequence spans 34 residues: Photosystem II reaction center protein M (34 aa).

Residues 5 to 25 form a helical membrane-spanning segment; it reads ILGLMAVALFILIPTSFLLIL.

This sequence belongs to the PsbM family. PSII is composed of 1 copy each of membrane proteins PsbA, PsbB, PsbC, PsbD, PsbE, PsbF, PsbH, PsbI, PsbJ, PsbK, PsbL, PsbM, PsbT, PsbX, PsbY, PsbZ, Psb30/Ycf12, at least 3 peripheral proteins of the oxygen-evolving complex and a large number of cofactors. It forms dimeric complexes.

The protein resides in the plastid. It localises to the chloroplast thylakoid membrane. One of the components of the core complex of photosystem II (PSII). PSII is a light-driven water:plastoquinone oxidoreductase that uses light energy to abstract electrons from H(2)O, generating O(2) and a proton gradient subsequently used for ATP formation. It consists of a core antenna complex that captures photons, and an electron transfer chain that converts photonic excitation into a charge separation. This subunit is found at the monomer-monomer interface. The sequence is that of Photosystem II reaction center protein M from Tupiella akineta (Green alga).